The sequence spans 202 residues: MTRVLVLYYSSYGHIETMAGAVAEGARSTGAEVTIKRVPETVPIEVADKAHFKLNQAAPVATVAELADYDAIIVGTGTRFGRMSSQMAVFLDQAGGLWARGALNGKVGGAFVSTGTQHGGQETTLFSIITNLMHFGMVIVGLPYSHQGQMSVDEIVGGAPYGATTVAGGDGSRQPSQIDLAGAFHQGEIVARTAAALVAARN.

The Flavodoxin-like domain maps to V4–V190. Residues S10–I15 and T78–F80 each bind FMN. Y12 is an NAD(+) binding site. W98 lines the substrate pocket. FMN contacts are provided by residues S113–G119 and H134.

The protein belongs to the WrbA family. It depends on FMN as a cofactor.

The catalysed reaction is a quinone + NADH + H(+) = a quinol + NAD(+). It carries out the reaction a quinone + NADPH + H(+) = a quinol + NADP(+). This Rhizobium meliloti (strain 1021) (Ensifer meliloti) protein is NAD(P)H dehydrogenase (quinone) 2.